A 236-amino-acid polypeptide reads, in one-letter code: MGRNSGFTFKQFHVDHDRCAMKVGTDGILLGAWAPVTNARRVLDIGSGSGLIALMLAQRSPADCRIDAVELDSNAARQARENAAASPWHERVTVIESAIQTYQATPYDLIVSNPPYFVAGQSFRDPARALARHTGGLDSRDLLAACDRLLAPNGEVALVVPTAMADEILCISADYDLHAVCYTAVITRAGKEANRVLLRLGRGLNKCEQGEIVIHSADGTYSDRYIQLTSPFYLKM.

The protein belongs to the methyltransferase superfamily. tRNA (adenine-N(6)-)-methyltransferase family.

The protein localises to the cytoplasm. The enzyme catalyses adenosine(37) in tRNA1(Val) + S-adenosyl-L-methionine = N(6)-methyladenosine(37) in tRNA1(Val) + S-adenosyl-L-homocysteine + H(+). Functionally, specifically methylates the adenine in position 37 of tRNA(1)(Val) (anticodon cmo5UAC). The sequence is that of tRNA1(Val) (adenine(37)-N6)-methyltransferase from Aeromonas hydrophila subsp. hydrophila (strain ATCC 7966 / DSM 30187 / BCRC 13018 / CCUG 14551 / JCM 1027 / KCTC 2358 / NCIMB 9240 / NCTC 8049).